The primary structure comprises 155 residues: 6,7-dimethyl-8-ribityllumazine synthase (155 aa).

5-amino-6-(D-ribitylamino)uracil is bound by residues Phe-18, 49–51 (ALE), and 75–77 (CVI). 80–81 (ET) contacts (2S)-2-hydroxy-3-oxobutyl phosphate. The active-site Proton donor is the His-83. Asn-108 provides a ligand contact to 5-amino-6-(D-ribitylamino)uracil. Arg-122 is a (2S)-2-hydroxy-3-oxobutyl phosphate binding site.

The protein belongs to the DMRL synthase family.

The enzyme catalyses (2S)-2-hydroxy-3-oxobutyl phosphate + 5-amino-6-(D-ribitylamino)uracil = 6,7-dimethyl-8-(1-D-ribityl)lumazine + phosphate + 2 H2O + H(+). Its pathway is cofactor biosynthesis; riboflavin biosynthesis; riboflavin from 2-hydroxy-3-oxobutyl phosphate and 5-amino-6-(D-ribitylamino)uracil: step 1/2. In terms of biological role, catalyzes the formation of 6,7-dimethyl-8-ribityllumazine by condensation of 5-amino-6-(D-ribitylamino)uracil with 3,4-dihydroxy-2-butanone 4-phosphate. This is the penultimate step in the biosynthesis of riboflavin. The sequence is that of 6,7-dimethyl-8-ribityllumazine synthase from Bartonella henselae (strain ATCC 49882 / DSM 28221 / CCUG 30454 / Houston 1) (Rochalimaea henselae).